The chain runs to 364 residues: Spermidine/putrescine import ATP-binding protein PotA (364 aa).

Residues 6-236 (IEIRQIYKSY…PANLHVAMFI (231 aa)) form the ABC transporter domain. Residue 38-45 (GPSGCGKT) coordinates ATP.

The protein belongs to the ABC transporter superfamily. Spermidine/putrescine importer (TC 3.A.1.11.1) family. As to quaternary structure, the complex is composed of two ATP-binding proteins (PotA), two transmembrane proteins (PotB and PotC) and a solute-binding protein (PotD).

The protein resides in the cell inner membrane. The catalysed reaction is ATP + H2O + polyamine-[polyamine-binding protein]Side 1 = ADP + phosphate + polyamineSide 2 + [polyamine-binding protein]Side 1.. Its function is as follows. Part of the ABC transporter complex PotABCD involved in spermidine/putrescine import. Responsible for energy coupling to the transport system. This chain is Spermidine/putrescine import ATP-binding protein PotA, found in Legionella pneumophila subsp. pneumophila (strain Philadelphia 1 / ATCC 33152 / DSM 7513).